The primary structure comprises 178 residues: ATP synthase subunit d, mitochondrial (178 aa).

The segment at 149–178 (NKPTFWPHTPEEQVGYKSKEQLEAEAQGHH) is disordered. Residues 165–178 (KSKEQLEAEAQGHH) are compositionally biased toward basic and acidic residues.

It belongs to the ATPase d subunit family. F-type ATPases have 2 components, CF(1) - the catalytic core - and CF(0) - the membrane proton channel. CF(0) seems to have nine subunits: a, b, c, d, e, f, g, F6 and 8 (or A6L).

It localises to the mitochondrion. The protein resides in the mitochondrion inner membrane. Its function is as follows. Mitochondrial membrane ATP synthase (F(1)F(0) ATP synthase or Complex V) produces ATP from ADP in the presence of a proton gradient across the membrane which is generated by electron transport complexes of the respiratory chain. F-type ATPases consist of two structural domains, F(1) - containing the extramembraneous catalytic core, and F(0) - containing the membrane proton channel, linked together by a central stalk and a peripheral stalk. During catalysis, ATP synthesis in the catalytic domain of F(1) is coupled via a rotary mechanism of the central stalk subunits to proton translocation. Part of the complex F(0) domain and the peripheric stalk, which acts as a stator to hold the catalytic alpha(3)beta(3) subcomplex and subunit a/ATP6 static relative to the rotary elements. This chain is ATP synthase subunit d, mitochondrial, found in Drosophila melanogaster (Fruit fly).